A 288-amino-acid polypeptide reads, in one-letter code: Elongation factor Ts (288 aa).

The involved in Mg(2+) ion dislocation from EF-Tu stretch occupies residues 82-85; the sequence is TDFV.

It belongs to the EF-Ts family.

The protein localises to the cytoplasm. Its function is as follows. Associates with the EF-Tu.GDP complex and induces the exchange of GDP to GTP. It remains bound to the aminoacyl-tRNA.EF-Tu.GTP complex up to the GTP hydrolysis stage on the ribosome. The sequence is that of Elongation factor Ts from Chlorobium limicola (strain DSM 245 / NBRC 103803 / 6330).